Reading from the N-terminus, the 307-residue chain is GMP synthase [glutamine-hydrolyzing] subunit B (307 aa).

Residues 1 to 184 (MWENFIEEKV…LGLPEKIYNR (184 aa)) form the GMPS ATP-PPase domain. Residue 27–33 (SGGVDSS) participates in ATP binding.

As to quaternary structure, heterodimer composed of a glutamine amidotransferase subunit (A) and a GMP-binding subunit (B).

It catalyses the reaction XMP + L-glutamine + ATP + H2O = GMP + L-glutamate + AMP + diphosphate + 2 H(+). Its pathway is purine metabolism; GMP biosynthesis; GMP from XMP (L-Gln route): step 1/1. In terms of biological role, catalyzes the synthesis of GMP from XMP. The sequence is that of GMP synthase [glutamine-hydrolyzing] subunit B from Thermococcus kodakarensis (strain ATCC BAA-918 / JCM 12380 / KOD1) (Pyrococcus kodakaraensis (strain KOD1)).